A 105-amino-acid polypeptide reads, in one-letter code: QGGVSVNCGGTYYSSTQVNRAINNAKSGQYSSTGYPHTYNNYEGFDFSDYCDGPYKEYPLKTSSSGYTGGSPGADRVVYDSNDGTFCGAITHTGASGNNFVQCSY.

Gln-1 is modified (pyrrolidone carboxylic acid). 2 disulfides stabilise this stretch: Cys-8/Cys-103 and Cys-51/Cys-87. The active site involves His-37. Glu-57 serves as the catalytic Proton acceptor. His-92 acts as the Proton donor in catalysis.

The protein belongs to the ribonuclease N1/T1 family.

The catalysed reaction is [RNA] containing guanosine + H2O = an [RNA fragment]-3'-guanosine-3'-phosphate + a 5'-hydroxy-ribonucleotide-3'-[RNA fragment].. The sequence is that of Guanyl-specific ribonuclease U1 from Ustilago sphaerogena (Smut fungus).